Here is a 187-residue protein sequence, read N- to C-terminus: Ribosome maturation factor RimM (187 aa).

The PRC barrel domain maps to 111 to 187; the sequence is KDEYYWVDLI…RILVDWQADF (77 aa).

The protein belongs to the RimM family. As to quaternary structure, binds ribosomal protein uS19.

The protein resides in the cytoplasm. An accessory protein needed during the final step in the assembly of 30S ribosomal subunit, possibly for assembly of the head region. Essential for efficient processing of 16S rRNA. May be needed both before and after RbfA during the maturation of 16S rRNA. It has affinity for free ribosomal 30S subunits but not for 70S ribosomes. The protein is Ribosome maturation factor RimM of Albidiferax ferrireducens (strain ATCC BAA-621 / DSM 15236 / T118) (Rhodoferax ferrireducens).